A 165-amino-acid polypeptide reads, in one-letter code: Chemotaxis protein CheW (165 aa).

It belongs to the CheW family.

Plays an essential role in chemotaxis signal transduction system in order to colonize the host stomach. This chain is Chemotaxis protein CheW, found in Helicobacter pylori (strain ATCC 700392 / 26695) (Campylobacter pylori).